Consider the following 387-residue polypeptide: Protein RecA, chromosomal (387 aa).

80 to 87 (GPESSGKT) serves as a coordination point for ATP. A disordered region spans residues 352 to 387 (EVAETTEDTSTKAKATKAKKEEKVVETEEIELELED). Residues 378 to 387 (TEEIELELED) are compositionally biased toward acidic residues.

This sequence belongs to the RecA family.

It is found in the cytoplasm. Its function is as follows. Can catalyze the hydrolysis of ATP in the presence of single-stranded DNA, the ATP-dependent uptake of single-stranded DNA by duplex DNA, and the ATP-dependent hybridization of homologous single-stranded DNAs. It interacts with LexA causing its activation and leading to its autocatalytic cleavage. The sequence is that of Protein RecA, chromosomal from Lactococcus lactis subsp. lactis (strain IL1403) (Streptococcus lactis).